A 105-amino-acid polypeptide reads, in one-letter code: Cell division protein FtsB (105 aa).

The Cytoplasmic portion of the chain corresponds to 1-3 (MGK). The chain crosses the membrane as a helical span at residues 4–21 (LTLLLLALLVWLQYSLWF). Over 22-105 (GKNGLHDYTR…QASGQQQNNR (84 aa)) the chain is Periplasmic. A coiled-coil region spans residues 33-62 (NDDVTAQQATNAKLKARNDQLFAEIDDLNG).

Belongs to the FtsB family. As to quaternary structure, part of a complex composed of FtsB, FtsL and FtsQ.

Its subcellular location is the cell inner membrane. Functionally, essential cell division protein. May link together the upstream cell division proteins, which are predominantly cytoplasmic, with the downstream cell division proteins, which are predominantly periplasmic. The sequence is that of Cell division protein FtsB from Klebsiella aerogenes (Enterobacter aerogenes).